We begin with the raw amino-acid sequence, 511 residues long: V-type proton ATPase subunit B, brain isoform (511 aa).

Arginine 400 contributes to the ATP binding site.

It belongs to the ATPase alpha/beta chains family. As to quaternary structure, V-ATPase is a heteromultimeric enzyme made up of two complexes: the ATP-hydrolytic V1 complex and the proton translocation V0 complex. The V1 complex consists of three catalytic AB heterodimers that form a heterohexamer, three peripheral stalks each consisting of EG heterodimers, one central rotor including subunits D and F, and the regulatory subunits C and H. The proton translocation complex V0 consists of the proton transport subunit a, a ring of proteolipid subunits c9c'', rotary subunit d, subunits e and f, and the accessory subunits ATP6AP1/Ac45 and ATP6AP2/PRR. In terms of tissue distribution, expressed in brain (at protein level). Expressed in all tissues tested, but highest in brain and in adrenal medulla.

It is found in the apical cell membrane. The protein resides in the melanosome. It localises to the cytoplasm. The protein localises to the cytoplasmic vesicle. Its subcellular location is the clathrin-coated vesicle membrane. It is found in the secretory vesicle. The protein resides in the synaptic vesicle membrane. In terms of biological role, non-catalytic subunit of the V1 complex of vacuolar(H+)-ATPase (V-ATPase), a multisubunit enzyme composed of a peripheral complex (V1) that hydrolyzes ATP and a membrane integral complex (V0) that translocates protons. V-ATPase is responsible for acidifying and maintaining the pH of intracellular compartments and in some cell types, is targeted to the plasma membrane, where it is responsible for acidifying the extracellular environment. In renal intercalated cells, can partially compensate the lack of ATP6V1B1 and mediate secretion of protons (H+) into the urine under base-line conditions but not in conditions of acid load. This Bos taurus (Bovine) protein is V-type proton ATPase subunit B, brain isoform (ATP6V1B2).